A 186-amino-acid polypeptide reads, in one-letter code: uncharacterized protein (186 aa).

One can recognise an N-acetyltransferase domain in the interval 12–184 (LLKSPVEEDD…HIYKLSKQIR (173 aa)).

This sequence belongs to the acetyltransferase family.

It localises to the cytoplasm. The protein resides in the nucleus. This is an uncharacterized protein from Schizosaccharomyces pombe (strain 972 / ATCC 24843) (Fission yeast).